Here is a 943-residue protein sequence, read N- to C-terminus: MLKLLLGDPNTRKLKRYQPIVEEINFLEEEISQLTDDELRKETQNLKSNISAELDFKKQKELLEEFLPKAFAIVREASKRVLDMRHFDVQLIGGMVLNECQIAEMKTGEGKTLVATLPCYLNALTGKGVHVVTVNDYLARRDAEWMGQVHRFLGLSVGLIQQDMNPVERKKNYDCDITYATNSELGFDYLRDNMATDISEVVQRKFNYCVIDEVDSILIDEARTPLIISGQVERPQEKYQKAAELSLALIKAKELSKDGIDPEGDYEVDEKQRSCILTDQGFAKCEEYLGVNDLYNPQDPWAHYITNALKAKELFIKDVNYIIKNEEAVIVDEFTGRVMPGRRWSDGQHQAIEAKESLKIQPETQTLASITYQNFFLLYPGLAGMTGTAKTEEVEFEKTYKLESTVIPTNQIRKRQDWSDQVFKTEIGKWKAVAKETAKIHRDGRPVLVGTTSVEKSELLSSLLSAEKIPHNLLNAKPENVEREAEIVAQAGRAGAVTIATNMAGRGTDIILGGNSDYMARLKLKEILIPLLVKPDNEHKPPIPKQRNSKSKGGFSRKAGSNLKKKISNSSTNLFPCKLDEVIEKKLSLLSDELVKNWGDKQLSVLELDDRIATAAEKAPTDDKLIRLLRESLSDVKNEYEKVLIHEEEKVREAGGLHVIGTERHESRRVDNQLRGRAGRQGDLGSTRFFLSLDDNLLRIFGGDRVANLMNAFRVDEDMPIESGMLTRSLESAQKKVETYYYDIRKQVFEYDEVMNNQRKAVYGERLRVLKGIDLKRQVIGYGERTMIEIVDAYINPDLPPEEWNIEQLISKVKEFIYLLDDLKVEDINLLSIEELKNYLQEQLRIAYDLKESQIDKIRPGLMREAERFFILQQIDNLWREHLQSMDSLRESVGLRGYGQKDPLIEYKNEGYDMFLEMMTNMRRNVIYSMFMFQPKTDKNDKN.

Residues glutamine 90, 108–112, and aspartate 509 contribute to the ATP site; that span reads GEGKT. The interval 535–562 is disordered; it reads PDNEHKPPIPKQRNSKSKGGFSRKAGSN.

Belongs to the SecA family. In terms of assembly, monomer and homodimer. Part of the essential Sec protein translocation apparatus which comprises SecA, SecYEG and auxiliary proteins SecDF. Other proteins may also be involved.

Its subcellular location is the cell inner membrane. The protein localises to the cellular thylakoid membrane. It is found in the cytoplasm. It catalyses the reaction ATP + H2O + cellular proteinSide 1 = ADP + phosphate + cellular proteinSide 2.. Functionally, part of the Sec protein translocase complex. Interacts with the SecYEG preprotein conducting channel. Has a central role in coupling the hydrolysis of ATP to the transfer of proteins into and across the cell membrane, serving as an ATP-driven molecular motor driving the stepwise translocation of polypeptide chains across the membrane. Its function is as follows. Probably participates in protein translocation into and across both the cytoplasmic and thylakoid membranes in cyanobacterial cells. This Prochlorococcus marinus (strain AS9601) protein is Protein translocase subunit SecA.